The following is a 311-amino-acid chain: tRNA dimethylallyltransferase (311 aa).

10–17 (GPTASGKT) lines the ATP pocket. 12-17 (TASGKT) contacts substrate. Interaction with substrate tRNA regions lie at residues 35-38 (DSAL), 159-163 (QRINR), and 240-245 (RCVGYR).

The protein belongs to the IPP transferase family. Monomer. The cofactor is Mg(2+).

It carries out the reaction adenosine(37) in tRNA + dimethylallyl diphosphate = N(6)-dimethylallyladenosine(37) in tRNA + diphosphate. Functionally, catalyzes the transfer of a dimethylallyl group onto the adenine at position 37 in tRNAs that read codons beginning with uridine, leading to the formation of N6-(dimethylallyl)adenosine (i(6)A). The sequence is that of tRNA dimethylallyltransferase from Haemophilus influenzae (strain PittEE).